A 1369-amino-acid chain; its full sequence is Serine/threonine-protein kinase SIK3 (1369 aa).

The tract at residues 26–55 (LLPPPAAGPPAAPAAVPPAAVPARPTAPAS) is disordered. A compositionally biased stretch (pro residues) spans 27–45 (LPPPAAGPPAAPAAVPPAA). A compositionally biased stretch (low complexity) spans 46 to 55 (VPARPTAPAS). Residues 66-317 (YEIDRTIGKG…MEQICRHKWM (252 aa)) enclose the Protein kinase domain. The residue at position 71 (Thr71) is a Phosphothreonine. Residues 72–80 (IGKGNFAVV) and Lys95 each bind ATP. Asp188 (proton acceptor) is an active-site residue. Thr221 bears the Phosphothreonine mark. Positions 344–384 (PLNDDVLLAMEDMGLDKERTLQSLRSDAYDHYSAIYSLLCD) constitute a UBA domain. Thr469 carries the post-translational modification Phosphothreonine. Ser551, Ser591, Ser592, Ser674, and Ser695 each carry phosphoserine. The tract at residues 775 to 821 (IQPSSPPPNHPSNHLFRQPSNSPPPVSSAMITSHGATSPSQFQGLPS) is disordered. Polar residues predominate over residues 803–818 (AMITSHGATSPSQFQG). A Phosphoserine modification is found at Ser914. The disordered stretch occupies residues 942–993 (LFSDQSRGSPSSYSPSTGVGFPPTQALKVPPLDQFPTFPPSAQQQPPHYTTS). Residues 944–957 (SDQSRGSPSSYSPS) are compositionally biased toward low complexity. Residues 981-993 (PSAQQQPPHYTTS) show a composition bias toward polar residues. At Ser1026 the chain carries Phosphoserine. Arg1034 is subject to Omega-N-methylarginine. The interval 1314–1338 (DEEDEECGVSLGHEHPGLGDGSQHL) is disordered.

It belongs to the protein kinase superfamily. CAMK Ser/Thr protein kinase family. SNF1 subfamily. Binds to and is activated by YWHAZ when phosphorylated on Thr-221. Interacts with 14-3-3 proteins. Interacts with HDAC4; this interaction leads to HDAC4 retention in the cytoplasm. Interacts with DEPTOR, MLST8/GbetaL, RICTOR and RPTOR. Mg(2+) is required as a cofactor. Phosphorylated at Thr-221 by STK11/LKB1 in complex with STE20-related adapter-alpha (STRADA) pseudo kinase and CAB39. In terms of tissue distribution, expressed in hypertrophic chondrocytes in the growth plate.

The protein localises to the cytoplasm. The enzyme catalyses L-seryl-[protein] + ATP = O-phospho-L-seryl-[protein] + ADP + H(+). It carries out the reaction L-threonyl-[protein] + ATP = O-phospho-L-threonyl-[protein] + ADP + H(+). Its activity is regulated as follows. Activated by phosphorylation on Thr-221. Functionally, positive regulator of mTOR signaling that functions by triggering the degradation of DEPTOR, an mTOR inhibitor. Required for chondrocyte hypertrophy during skeletogenesis. Negatively regulates cAMP signaling pathway possibly by acting on CRTC2/TORC2 and CRTC3/TORC3. Prevents HDAC4 translocation to the nucleus. In Mus musculus (Mouse), this protein is Serine/threonine-protein kinase SIK3 (Sik3).